The primary structure comprises 516 residues: Protein psiC (516 aa).

The signal sequence occupies residues 1–19 (MKILILSFFLILGINLVFC). The 141-residue stretch at 109–249 (ESKDEPGIYV…YDACGVCLGK (141 aa)) folds into the PA14 domain. Asn134, Asn234, Asn250, Asn284, Asn333, Asn357, and Asn367 each carry an N-linked (GlcNAc...) asparagine glycan. Low complexity predominate over residues 418 to 427 (DIIIDSSSDI). Residues 418–465 (DIIIDSSSDIPIPTLSPSPQPSRFPTDTPTNTPMPPTRPPTPTEDPKI) are disordered. Positions 449 to 460 (TPMPPTRPPTPT) are enriched in pro residues.

This sequence belongs to the prespore-cell-inducing factor family.

It is found in the secreted. The sequence is that of Protein psiC (psiC) from Dictyostelium discoideum (Social amoeba).